The sequence spans 296 residues: Protoheme IX farnesyltransferase (296 aa).

9 helical membrane passes run 29–49 (LSGL…GHVA), 54–74 (ALTV…NCWM), 98–118 (FTAL…LALV), 121–141 (PLTA…YTPM), 147–167 (LALL…WTAA), 175–195 (GLAL…AVSI), 221–241 (WIAA…PLRV), 246–266 (YGAV…AGVG), and 275–295 (NFFL…FLGA).

This sequence belongs to the UbiA prenyltransferase family. Protoheme IX farnesyltransferase subfamily.

It localises to the cell inner membrane. The catalysed reaction is heme b + (2E,6E)-farnesyl diphosphate + H2O = Fe(II)-heme o + diphosphate. The protein operates within porphyrin-containing compound metabolism; heme O biosynthesis; heme O from protoheme: step 1/1. In terms of biological role, converts heme B (protoheme IX) to heme O by substitution of the vinyl group on carbon 2 of heme B porphyrin ring with a hydroxyethyl farnesyl side group. The protein is Protoheme IX farnesyltransferase of Anaeromyxobacter sp. (strain Fw109-5).